A 787-amino-acid polypeptide reads, in one-letter code: Dolichyl-diphosphooligosaccharide--protein glycosyltransferase subunit STT3A (787 aa).

The Cytoplasmic portion of the chain corresponds to 1-18 (MAEPESSTAAAGGSRLRN). Residues 19–39 (ACGGVLCAFTLLLIGVLAFSI) traverse the membrane as a helical segment. The Lumenal portion of the chain corresponds to 40-125 (RLFSVIKYES…LSVETVCVFT (86 aa)). A DXD motif 1 motif is present at residues 53-55 (EFD). Asp-55 is a binding site for Mn(2+). The chain crosses the membrane as a helical span at residues 126 to 144 (APIFSANASWATYLLTKEA). Residues 145–146 (KG) are Cytoplasmic-facing. Residues 147–164 (TGAGLMAAAILAMVPSYI) form a helical membrane-spanning segment. Residues 165-175 (SRSVAGSYDNE) are Lumenal-facing. Asp-173 and Glu-175 together coordinate Mn(2+). The short motif at 173-175 (DNE) is the DXD motif 2 element. Residues 176–195 (AVAIFALIFTFYLYVKTLNT) form a helical membrane-spanning segment. Over 196 to 197 (GS) the chain is Cytoplasmic. Residues 198–212 (LFYATLNALSYFYMV) traverse the membrane as a helical segment. The Lumenal segment spans residues 213 to 217 (CSWGG). Residues 218–234 (YTFIINLIPIHVLLCIV) form a helical membrane-spanning segment. Residues 235–239 (TGRYS) lie on the Cytoplasmic side of the membrane. Residues 240 to 265 (SRLYIAYAPLVILGTLLAALVPVVGF) form a helical membrane-spanning segment. At 266 to 273 (NAVMTSEH) the chain is on the lumenal side. A helical membrane pass occupies residues 274–293 (FASFLVFIILHVVALVYYIK). The Cytoplasmic segment spans residues 294–306 (GLLTPRLFKVAMT). Residues 307 to 327 (LVITVGLAVCFAVIAILIALV) form a helical membrane-spanning segment. The Lumenal portion of the chain corresponds to 328–365 (ASSPTKGWSGRSLSLLDPTYASKYIPIIASVSEHQPPT). The short motif at 357 to 360 (SVSE) is the SVSE motif element. Residues 366–388 (WPSYFMDINVLAFLIPAGIISCF) form a helical membrane-spanning segment. Residues 389–394 (LPLSDA) are Cytoplasmic-facing. Residues 395–411 (SSFVVLYLVTAVYFSGV) form a helical membrane-spanning segment. Topologically, residues 412 to 415 (MVRL) are lumenal. Position 414 (Arg-414) interacts with dolichyl diphosphooligosaccharide. A helical transmembrane segment spans residues 416–437 (MLVLAPAACILSGIALSEAFDV). The Cytoplasmic portion of the chain corresponds to 438-525 (LTRSVKYQLS…KLLVLPMEAS (88 aa)). A compositionally biased stretch (low complexity) spans 453–475 (SPAASGDSSAESSSASTVSTNSA). The interval 453–507 (SPAASGDSSAESSSASTVSTNSAKNETRPEKTETAPKEKPSKKNRKKEKEVAESV) is disordered. The segment covering 477–504 (NETRPEKTETAPKEKPSKKNRKKEKEVA) has biased composition (basic and acidic residues). Residues 526–546 (VLGILLLIVLGGFYVVHCVWA) traverse the membrane as a helical segment. Residues 547 to 787 (AAEAYSAPSI…AAGRKKNPWQ (241 aa)) lie on the Lumenal side of the membrane. Positions 592–594 (WWD) are interacts with target acceptor peptide in protein substrate. A WWDYG motif motif is present at residues 592–596 (WWDYG). Tyr-597 is a binding site for dolichyl diphosphooligosaccharide. N-linked (GlcNAc...) asparagine glycans are attached at residues Asn-604 and Asn-611. An N-linked (GlcNAc...) (high mannose) asparagine glycan is attached at Asn-615. Positions 659–666 (DINKFLWM) match the DK motif motif. The span at 759 to 769 (RVRGKLKKLKS) shows a compositional bias: basic residues. The disordered stretch occupies residues 759-787 (RVRGKLKKLKSGSKASSTNAAGRKKNPWQ).

It belongs to the STT3 family. In terms of assembly, component of the oligosaccharyltransferase (OST) complex. Requires Mg(2+) as cofactor. The cofactor is Mn(2+).

Its subcellular location is the endoplasmic reticulum membrane. The catalysed reaction is a di-trans,poly-cis-dolichyl diphosphooligosaccharide + L-asparaginyl-[protein] = N(4)-(oligosaccharide-(1-&gt;4)-N-acetyl-beta-D-glucosaminyl-(1-&gt;4)-N-acetyl-beta-D-glucosaminyl)-L-asparaginyl-[protein] + a di-trans,poly-cis-dolichyl diphosphate + H(+). Its pathway is protein modification; protein glycosylation. Catalytic subunit of the oligosaccharyl transferase (OST) complex that catalyzes the initial transfer of a defined glycan (Glc(3)Man(9)GlcNAc(2) in eukaryotes) from the lipid carrier dolichol-pyrophosphate to an asparagine residue within an Asn-X-Ser/Thr consensus motif in nascent polypeptide chains, the first step in protein N-glycosylation. N-glycosylation occurs cotranslationally and the complex associates with the Sec61 complex at the channel-forming translocon complex that mediates protein translocation across the endoplasmic reticulum (ER). All subunits are required for a maximal enzyme activity. This subunit contains the active site and the acceptor peptide and donor lipid-linked oligosaccharide (LLO) binding pockets. This chain is Dolichyl-diphosphooligosaccharide--protein glycosyltransferase subunit STT3A (STT3A), found in Oryza sativa subsp. japonica (Rice).